The primary structure comprises 486 residues: 23S rRNA (uracil(1939)-C(5))-methyltransferase RlmD (486 aa).

A TRAM domain is found at 10-71 (TVKAPEYLPD…SSFEKAVVMA (62 aa)). The [4Fe-4S] cluster site is built by Cys84, Cys94, Cys97, and Cys176. Gln285, Phe314, Asn319, Glu335, Asn370, and Asp391 together coordinate S-adenosyl-L-methionine. Cys442 functions as the Nucleophile in the catalytic mechanism.

This sequence belongs to the class I-like SAM-binding methyltransferase superfamily. RNA M5U methyltransferase family. RlmD subfamily.

It catalyses the reaction uridine(1939) in 23S rRNA + S-adenosyl-L-methionine = 5-methyluridine(1939) in 23S rRNA + S-adenosyl-L-homocysteine + H(+). Functionally, catalyzes the formation of 5-methyl-uridine at position 1939 (m5U1939) in 23S rRNA. The protein is 23S rRNA (uracil(1939)-C(5))-methyltransferase RlmD of Polaromonas sp. (strain JS666 / ATCC BAA-500).